Consider the following 244-residue polypeptide: 1-(5-phosphoribosyl)-5-[(5-phosphoribosylamino)methylideneamino] imidazole-4-carboxamide isomerase (244 aa).

D8 functions as the Proton acceptor in the catalytic mechanism. The active-site Proton donor is the D130.

Belongs to the HisA/HisF family.

It is found in the cytoplasm. The catalysed reaction is 1-(5-phospho-beta-D-ribosyl)-5-[(5-phospho-beta-D-ribosylamino)methylideneamino]imidazole-4-carboxamide = 5-[(5-phospho-1-deoxy-D-ribulos-1-ylimino)methylamino]-1-(5-phospho-beta-D-ribosyl)imidazole-4-carboxamide. It functions in the pathway amino-acid biosynthesis; L-histidine biosynthesis; L-histidine from 5-phospho-alpha-D-ribose 1-diphosphate: step 4/9. The protein is 1-(5-phosphoribosyl)-5-[(5-phosphoribosylamino)methylideneamino] imidazole-4-carboxamide isomerase of Hahella chejuensis (strain KCTC 2396).